A 594-amino-acid polypeptide reads, in one-letter code: Protein CBFA2T2 (594 aa).

Phosphoserine is present on S24. K29 is covalently cross-linked (Glycyl lysine isopeptide (Lys-Gly) (interchain with G-Cter in SUMO2)). A disordered region spans residues 48–96; that stretch reads GGPRPVSFTPTALSNGINHSPPTLNGAPSPPQRFSNGPASSTSSALTNQ. 2 stretches are compositionally biased toward polar residues: residues 55-70 and 79-96; these read FTPT…SPPT and QRFS…LTNQ. Positions 98–206 are interaction with PRDM14; sequence LPATCGARQL…QHEHLLLNTS (109 aa). Residues 104–199 form the TAFH domain; the sequence is ARQLSKLKRF…TPSQYLAQHE (96 aa). Positions 220–257 are disordered; it reads VHGNGKRPSPERRDENNFERDTVPPEPPAKRVCTISPA. Positions 227-242 are enriched in basic and acidic residues; the sequence is PSPERRDENNFERDTV. The residue at position 255 (S255) is a Phosphoserine. The nervy homology region 2 (NHR2) stretch occupies residues 322-368; sequence QDELVDHRLTEREWADEWKHLDHALNCIMEMVEKTRRSMAVLRRCQE. The tract at residues 388–416 is disordered; the sequence is RKTGTELVSRQHSPGSTDSLSNDSQREFT. Residues 393–410 show a composition bias toward polar residues; that stretch reads ELVSRQHSPGSTDSLSND. Position 400 is a phosphoserine (S400). The nervy homology region 3 (NHR3) stretch occupies residues 426–475; sequence VEFWKKTEEAVNKVKIQAMSEVQKAVAEAEQKAFEVIATERARMEQTIAD. A Glycyl lysine isopeptide (Lys-Gly) (interchain with G-Cter in SUMO2) cross-link involves residue K440. A coiled-coil region spans residues 442–482; sequence QAMSEVQKAVAEAEQKAFEVIATERARMEQTIADVKRQAAE. The Zn(2+) site is built by C498, C501, C509, C512, C518, C522, H530, and C534. Residues 498 to 534 form an MYND-type zinc finger; that stretch reads CWNCGRKASETCSGCNIARYCGSFCQHKDWERHHRLC. The tract at residues 538–594 is disordered; the sequence is LHGHSPHSQSRPLLPGGRGSARSADCSVPSPALDKTSATTSRSSTPASVTAIDANGL. The residue at position 567 (S567) is a Phosphoserine. Positions 573–588 are enriched in low complexity; it reads TSATTSRSSTPASVTA.

This sequence belongs to the CBFA2T family. In terms of assembly, homooligomer. Homotetramerization is mediated by the NHR2 domain. Interacts with CBFA2T3/MTG16. Can interact with RUNX1T1/CBFA2T1. Heterotetramerization between members of the CBFA2T family is proposed. Interacts with RBP, GFI1, TCF4, PRDM14. Interacts with TAL1 and CBFA2T3/MTG16; the heteromer with CBFA2T3/MTG16 may function in repression of TAL1. As to expression, expressed in embryonic stem cells.

It is found in the nucleus. Transcriptional corepressor which facilitates transcriptional repression via its association with DNA-binding transcription factors and recruitment of other corepressors and histone-modifying enzymes. Via association with PRDM14 is involved in regulation of embryonic stem cell (ESC) pluripotency. Involved in primordial germ cell (PCG) formation. Stabilizes PRDM14 and OCT4 on chromatin in a homooligomerization-dependent mannerCan repress the expression of MMP7 in a ZBTB33-dependent manner. Through heteromerization with CBFA2T3/MTG16 may be involved in regulation of the proliferation and the differentiation of erythroid progenitors by repressing the expression of TAL1 target genes. Required for the maintenance of the secretory cell lineage in the small intestine. Can inhibit Notch signaling probably by association with RBPJ and may be involved in GFI1-mediated Paneth cell differentiation. The polypeptide is Protein CBFA2T2 (Cbfa2t2) (Mus musculus (Mouse)).